The chain runs to 460 residues: V-type ATP synthase beta chain (460 aa).

The protein belongs to the ATPase alpha/beta chains family.

Produces ATP from ADP in the presence of a proton gradient across the membrane. The V-type beta chain is a regulatory subunit. This chain is V-type ATP synthase beta chain, found in Clostridium perfringens (strain ATCC 13124 / DSM 756 / JCM 1290 / NCIMB 6125 / NCTC 8237 / Type A).